We begin with the raw amino-acid sequence, 423 residues long: MLDTLLINIGQLLTMDQEDGLLRREAMNTLPVIENGAVGIENGVITFVGTVEEAKGLQAKEVIDCGGKMVSPGLVDPHTHLVFGGSRENEIALKLQGVPYLEILEKGGGILSTVNATKQASKEELVQKAKFHLDRMLSFGVTTVEAKSGYGLDDETEWKQLEATAQLQKEHPIDLVSTFLGAHAVPKEYKGRSKEFLQWMLDLLPEMKEKQLAEFVDIFCETGVFSVEESKDFLLKAKELGFDVKIHADEIDPLGGAEAAAEIGAASADHLVGASDKGIEMLANSNTVATLLPGTTFYLNKESFARGRKMIDEGVAVALATDFNPGSCPTENIQLIMSIAMLKLKMTPEEVWNAVTVNSSYAINRGEVAGKIRVGRKADLVLWDAYNYAYVPYHYGVSHVNTVWKNGNIAYTRGEQSWSTATI.

Positions 78 and 80 each coordinate Fe(3+). The Zn(2+) site is built by histidine 78 and histidine 80. 4-imidazolone-5-propanoate contacts are provided by arginine 87, tyrosine 150, and histidine 183. Position 150 (tyrosine 150) interacts with N-formimidoyl-L-glutamate. Residue histidine 247 participates in Fe(3+) binding. Residue histidine 247 coordinates Zn(2+). Glutamate 250 lines the 4-imidazolone-5-propanoate pocket. Fe(3+) is bound at residue aspartate 322. Residue aspartate 322 coordinates Zn(2+). Residues asparagine 324 and glycine 326 each contribute to the N-formimidoyl-L-glutamate site. Serine 327 contributes to the 4-imidazolone-5-propanoate binding site.

This sequence belongs to the metallo-dependent hydrolases superfamily. HutI family. Zn(2+) is required as a cofactor. Requires Fe(3+) as cofactor.

Its subcellular location is the cytoplasm. The enzyme catalyses 4-imidazolone-5-propanoate + H2O = N-formimidoyl-L-glutamate. Its pathway is amino-acid degradation; L-histidine degradation into L-glutamate; N-formimidoyl-L-glutamate from L-histidine: step 3/3. Functionally, catalyzes the hydrolytic cleavage of the carbon-nitrogen bond in imidazolone-5-propanoate to yield N-formimidoyl-L-glutamate. It is the third step in the universal histidine degradation pathway. The polypeptide is Imidazolonepropionase (Bacillus cereus (strain ZK / E33L)).